The sequence spans 248 residues: Large ribosomal subunit protein uL4 (248 aa).

Residues 44 to 109 (QDTGTDEYAG…LDINTKERKL (66 aa)) form a disordered region. Over residues 92-109 (PKAEKDRGLDINTKERKL) the composition is skewed to basic and acidic residues.

This sequence belongs to the universal ribosomal protein uL4 family. As to quaternary structure, part of the 50S ribosomal subunit.

One of the primary rRNA binding proteins, this protein initially binds near the 5'-end of the 23S rRNA. It is important during the early stages of 50S assembly. It makes multiple contacts with different domains of the 23S rRNA in the assembled 50S subunit and ribosome. Functionally, forms part of the polypeptide exit tunnel. This is Large ribosomal subunit protein uL4 from Natronomonas pharaonis (strain ATCC 35678 / DSM 2160 / CIP 103997 / JCM 8858 / NBRC 14720 / NCIMB 2260 / Gabara) (Halobacterium pharaonis).